The primary structure comprises 183 residues: Adenine phosphoribosyltransferase (183 aa).

The protein belongs to the purine/pyrimidine phosphoribosyltransferase family. In terms of assembly, homodimer.

The protein resides in the cytoplasm. The catalysed reaction is AMP + diphosphate = 5-phospho-alpha-D-ribose 1-diphosphate + adenine. It functions in the pathway purine metabolism; AMP biosynthesis via salvage pathway; AMP from adenine: step 1/1. Its function is as follows. Catalyzes a salvage reaction resulting in the formation of AMP, that is energically less costly than de novo synthesis. This chain is Adenine phosphoribosyltransferase, found in Salmonella heidelberg (strain SL476).